The sequence spans 256 residues: Thiazole synthase (256 aa).

The active-site Schiff-base intermediate with DXP is Lys-95. 1-deoxy-D-xylulose 5-phosphate is bound by residues Gly-156, 182–183 (AG), and 204–205 (NT).

It belongs to the ThiG family. In terms of assembly, homotetramer. Forms heterodimers with either ThiH or ThiS.

It localises to the cytoplasm. The enzyme catalyses [ThiS sulfur-carrier protein]-C-terminal-Gly-aminoethanethioate + 2-iminoacetate + 1-deoxy-D-xylulose 5-phosphate = [ThiS sulfur-carrier protein]-C-terminal Gly-Gly + 2-[(2R,5Z)-2-carboxy-4-methylthiazol-5(2H)-ylidene]ethyl phosphate + 2 H2O + H(+). The protein operates within cofactor biosynthesis; thiamine diphosphate biosynthesis. Catalyzes the rearrangement of 1-deoxy-D-xylulose 5-phosphate (DXP) to produce the thiazole phosphate moiety of thiamine. Sulfur is provided by the thiocarboxylate moiety of the carrier protein ThiS. In vitro, sulfur can be provided by H(2)S. The polypeptide is Thiazole synthase (Shigella dysenteriae serotype 1 (strain Sd197)).